A 977-amino-acid polypeptide reads, in one-letter code: Synaptonemal complex protein 2-like (977 aa).

Disordered regions lie at residues 447–474 (LGSQTSEHSSTTKTSSANRSVQKSLSNA), 574–593 (QSTERATPASRYRASMNSPL), 642–728 (RNKS…QDIM), and 804–824 (TEKNVNRSAADSEDSEDVFYS). Over residues 449-462 (SQTSEHSSTTKTSS) the composition is skewed to low complexity. Over residues 463–474 (ANRSVQKSLSNA) the composition is skewed to polar residues. Positions 674–693 (SRKEMHRPEDINPKSPHSAE) are enriched in basic and acidic residues.

It belongs to the SYCP2 family. Ubiquitinated and gradually degraded by the proteasome during oocyte maturation. Post-translationally, phosphorylated in maturing oocytes, before its degradation. Expressed in immature oocytes (at protein level). Expressed in the ovary.

The protein localises to the nucleus. Its subcellular location is the chromosome. The protein resides in the centromere. It localises to the nucleolus. Functionally, oocyte-specific protein that localizes to centromeres at the dictyate stage and regulates the survival of primordial oocytes. This chain is Synaptonemal complex protein 2-like (sycp2l), found in Xenopus laevis (African clawed frog).